Here is a 327-residue protein sequence, read N- to C-terminus: DNA-directed RNA polymerase subunit alpha (327 aa).

The segment at 1–233 (MQGSVTEFLK…EQLEAFVDLR (233 aa)) is alpha N-terminal domain (alpha-NTD). An alpha C-terminal domain (alpha-CTD) region spans residues 247-327 (FDPVLLRPVD…NWPPLGFIDK (81 aa)).

Belongs to the RNA polymerase alpha chain family. As to quaternary structure, homodimer. The RNAP catalytic core consists of 2 alpha, 1 beta, 1 beta' and 1 omega subunit. When a sigma factor is associated with the core the holoenzyme is formed, which can initiate transcription.

It catalyses the reaction RNA(n) + a ribonucleoside 5'-triphosphate = RNA(n+1) + diphosphate. Functionally, DNA-dependent RNA polymerase catalyzes the transcription of DNA into RNA using the four ribonucleoside triphosphates as substrates. This Baumannia cicadellinicola subsp. Homalodisca coagulata protein is DNA-directed RNA polymerase subunit alpha.